Consider the following 233-residue polypeptide: Lysoplasmalogenase TMEM86B (233 aa).

Residues 1–30 (MPCCDPYPWIGLNVGRLSSFPLLKYPQVRR) are Cytoplasmic-facing. Residues 31 to 47 (WLAPFIVACSLYFLLWI) traverse the membrane as a helical segment. Residues 48 to 53 (PEDQPS) lie on the Extracellular side of the membrane. The helical transmembrane segment at 54 to 75 (WVSALVKCQPILCLVLFLWAVA) threads the bilayer. Residues 76–81 (PGGSYT) lie on the Cytoplasmic side of the membrane. The chain crosses the membrane as a helical span at residues 82–100 (WLLQGALTCSAVGDACLIW). Topologically, residues 101–106 (PEAFFY) are extracellular. The chain crosses the membrane as a helical span at residues 107-124 (GMAVFSVAHLLYLWAFGL). Over 125-130 (SPLQPG) the chain is Cytoplasmic. The helical transmembrane segment at 131-147 (LLLCTTLASLTYYSFLL) threads the bilayer. The Extracellular portion of the chain corresponds to 148 to 153 (LHLEPN). A helical transmembrane segment spans residues 154-170 (MVLPVAAYGLILNTMLW). Residues 171–178 (RGLVLGRS) lie on the Cytoplasmic side of the membrane. Residues 179 to 195 (AGWGAVLFIFSDGVLAW) traverse the membrane as a helical segment. Residues 196–206 (DTFVYTLPFAR) lie on the Extracellular side of the membrane. A helical transmembrane segment spans residues 207–225 (LVTMSTYYAAQLLLTLSAL). The Cytoplasmic segment spans residues 226-233 (RSPGLKTH).

This sequence belongs to the TMEM86 family. In terms of assembly, homodimer.

The protein resides in the endoplasmic reticulum membrane. Its subcellular location is the cytoplasm. The enzyme catalyses a 1-O-(1Z-alkenyl)-sn-glycero-3-phosphocholine + H2O = a 2,3-saturated aldehyde + sn-glycerol 3-phosphocholine. The catalysed reaction is a 1-O-(1Z-alkenyl)-sn-glycero-3-phosphoethanolamine + H2O = a 2,3-saturated aldehyde + sn-glycero-3-phosphoethanolamine. Competitively inhibited by lysophosphatidic acid. In terms of biological role, catalyzes the hydrolysis of the vinyl ether bond of choline or ethanolamine lysoplasmalogens, forming fatty aldehyde and glycerophosphocholine or glycerophosphoethanolamine, respectively and is specific for the sn-2-deacylated (lyso) form of plasmalogen. This is Lysoplasmalogenase TMEM86B (Tmem86b) from Rattus norvegicus (Rat).